The primary structure comprises 719 residues: Eukaryotic translation initiation factor 3 subunit B (719 aa).

The 88-residue stretch at 60 to 147 (NILVVDNLPV…HIFAVNMFDD (88 aa)) folds into the RRM domain. 3 WD repeats span residues 167 to 207 (VPGE…KPEL), 511 to 553 (LKGK…TMAS), and 555 to 598 (EHFM…LYRI). Over residues 675 to 686 (EKMERQKLRDGE) the composition is skewed to basic and acidic residues. A disordered region spans residues 675–698 (EKMERQKLRDGEASDEEEEYEAKE). Over residues 687–698 (ASDEEEEYEAKE) the composition is skewed to acidic residues.

Belongs to the eIF-3 subunit B family. As to quaternary structure, component of the eukaryotic translation initiation factor 3 (eIF-3) complex.

The protein localises to the cytoplasm. Its function is as follows. RNA-binding component of the eukaryotic translation initiation factor 3 (eIF-3) complex, which is involved in protein synthesis of a specialized repertoire of mRNAs and, together with other initiation factors, stimulates binding of mRNA and methionyl-tRNAi to the 40S ribosome. The eIF-3 complex specifically targets and initiates translation of a subset of mRNAs involved in cell proliferation. In Nicotiana tabacum (Common tobacco), this protein is Eukaryotic translation initiation factor 3 subunit B (TIF3B1).